The following is a 184-amino-acid chain: Antigen Sm21.7 (184 aa).

The EF-hand domain occupies 37–72 (LDMKQVNEWIALFDVDKDQKITFEEFCRGLGLKQNE). D50, D52, D54, K56, and E61 together coordinate Ca(2+).

The polypeptide is Antigen Sm21.7 (SM21.7) (Schistosoma mansoni (Blood fluke)).